The chain runs to 280 residues: Shikimate dehydrogenase (NADP(+)) (280 aa).

Residues 15-17 (SLS) and threonine 62 contribute to the shikimate site. The active-site Proton acceptor is the lysine 66. Residues asparagine 88 and aspartate 104 each coordinate shikimate. NADP(+)-binding positions include 128–132 (GAGGA), 151–156 (NRTEGR), and isoleucine 222. Tyrosine 224 is a binding site for shikimate. Glycine 245 serves as a coordination point for NADP(+).

The protein belongs to the shikimate dehydrogenase family. As to quaternary structure, homodimer.

The enzyme catalyses shikimate + NADP(+) = 3-dehydroshikimate + NADPH + H(+). Its pathway is metabolic intermediate biosynthesis; chorismate biosynthesis; chorismate from D-erythrose 4-phosphate and phosphoenolpyruvate: step 4/7. Its function is as follows. Involved in the biosynthesis of the chorismate, which leads to the biosynthesis of aromatic amino acids. Catalyzes the reversible NADPH linked reduction of 3-dehydroshikimate (DHSA) to yield shikimate (SA). The protein is Shikimate dehydrogenase (NADP(+)) of Methanosarcina barkeri (strain Fusaro / DSM 804).